A 179-amino-acid chain; its full sequence is Large ribosomal subunit protein uL6 (179 aa).

The protein belongs to the universal ribosomal protein uL6 family. In terms of assembly, part of the 50S ribosomal subunit.

Its function is as follows. This protein binds to the 23S rRNA, and is important in its secondary structure. It is located near the subunit interface in the base of the L7/L12 stalk, and near the tRNA binding site of the peptidyltransferase center. The protein is Large ribosomal subunit protein uL6 of Bifidobacterium longum subsp. infantis (strain ATCC 15697 / DSM 20088 / JCM 1222 / NCTC 11817 / S12).